The primary structure comprises 886 residues: cytokinesis protein 3 (886 aa).

The SH3 domain occupies 6 to 67 (QLPCMVRALY…PSNFVHCLDI (62 aa)). The segment covering 72-88 (PGSSMSRTSASSFRYSS) has biased composition (low complexity). The interval 72–189 (PGSSMSRTSA…DLSRSTPSPL (118 aa)) is disordered. The span at 89–104 (PQKSSIDTPITSSDQG) shows a compositional bias: polar residues. Low complexity predominate over residues 135–154 (LNSLGSSLSLKKSVSRPPSS). The span at 155–188 (MSRTNLDVSSRWDNTADNDSQIDAQDLSRSTPSP) shows a compositional bias: polar residues. Residue Ser-213 is modified to Phosphoserine. Disordered regions lie at residues 219–290 (TKST…SPSD) and 358–393 (RRGS…SPHT). Polar residues predominate over residues 253 to 264 (DNSSKPRTSLQP).

It belongs to the CYK3 family.

The protein localises to the cell tip. Its function is as follows. Involved in cytokinesis. This chain is cytokinesis protein 3 (cyk3), found in Schizosaccharomyces pombe (strain 972 / ATCC 24843) (Fission yeast).